The sequence spans 353 residues: Photosystem II protein D1 (353 aa).

Threonine 2 carries the N-acetylthreonine modification. Threonine 2 is subject to Phosphothreonine. 3 helical membrane-spanning segments follow: residues 29–46 (YIGW…TATS), 118–133 (HFLL…EWEL), and 142–156 (WIAV…AATA). Residue histidine 118 participates in chlorophyll a binding. Tyrosine 126 serves as a coordination point for pheophytin a. Aspartate 170 and glutamate 189 together coordinate [CaMn4O5] cluster. A helical transmembrane segment spans residues 197-218 (FHMLGVAGVFGGSLFSAMHGSL). Histidine 198 serves as a coordination point for chlorophyll a. Residues histidine 215 and 264 to 265 (SF) contribute to the a quinone site. Histidine 215 is a binding site for Fe cation. Residue histidine 272 coordinates Fe cation. Residues 274–288 (FLAAWPVVGIWFTAL) form a helical membrane-spanning segment. 4 residues coordinate [CaMn4O5] cluster: histidine 332, glutamate 333, aspartate 342, and alanine 344. The propeptide occupies 345–353 (AVEAPAVNG).

Belongs to the reaction center PufL/M/PsbA/D family. PSII is composed of 1 copy each of membrane proteins PsbA, PsbB, PsbC, PsbD, PsbE, PsbF, PsbH, PsbI, PsbJ, PsbK, PsbL, PsbM, PsbT, PsbX, PsbY, PsbZ, Psb30/Ycf12, at least 3 peripheral proteins of the oxygen-evolving complex and a large number of cofactors. It forms dimeric complexes. Requires The D1/D2 heterodimer binds P680, chlorophylls that are the primary electron donor of PSII, and subsequent electron acceptors. It shares a non-heme iron and each subunit binds pheophytin, quinone, additional chlorophylls, carotenoids and lipids. D1 provides most of the ligands for the Mn4-Ca-O5 cluster of the oxygen-evolving complex (OEC). There is also a Cl(-1) ion associated with D1 and D2, which is required for oxygen evolution. The PSII complex binds additional chlorophylls, carotenoids and specific lipids. as cofactor. Post-translationally, tyr-161 forms a radical intermediate that is referred to as redox-active TyrZ, YZ or Y-Z. In terms of processing, C-terminally processed by CTPA; processing is essential to allow assembly of the oxygen-evolving complex and thus photosynthetic growth.

It is found in the plastid. The protein localises to the chloroplast thylakoid membrane. It catalyses the reaction 2 a plastoquinone + 4 hnu + 2 H2O = 2 a plastoquinol + O2. Photosystem II (PSII) is a light-driven water:plastoquinone oxidoreductase that uses light energy to abstract electrons from H(2)O, generating O(2) and a proton gradient subsequently used for ATP formation. It consists of a core antenna complex that captures photons, and an electron transfer chain that converts photonic excitation into a charge separation. The D1/D2 (PsbA/PsbD) reaction center heterodimer binds P680, the primary electron donor of PSII as well as several subsequent electron acceptors. This is Photosystem II protein D1 from Conocephalum conicum (Snakeskin liverwort).